Reading from the N-terminus, the 338-residue chain is Holliday junction branch migration complex subunit RuvB (338 aa).

The tract at residues 1-181 (MEERILTQNF…FGVINRLDYY (181 aa)) is large ATPase domain (RuvB-L). ATP-binding positions include Leu-20, Arg-21, Gly-62, Lys-65, Thr-66, Thr-67, 128-130 (EDF), Arg-171, Tyr-181, and Arg-218. Mg(2+) is bound at residue Thr-66. The interval 182-252 (SVEELKEIIK…TSKEALDVLG (71 aa)) is small ATPAse domain (RuvB-S). The head domain (RuvB-H) stretch occupies residues 255–338 (EIGLEYIDRK…YIEQGRIEGV (84 aa)). Residues Arg-310 and Arg-315 each coordinate DNA.

Belongs to the RuvB family. As to quaternary structure, homohexamer. Forms an RuvA(8)-RuvB(12)-Holliday junction (HJ) complex. HJ DNA is sandwiched between 2 RuvA tetramers; dsDNA enters through RuvA and exits via RuvB. An RuvB hexamer assembles on each DNA strand where it exits the tetramer. Each RuvB hexamer is contacted by two RuvA subunits (via domain III) on 2 adjacent RuvB subunits; this complex drives branch migration. In the full resolvosome a probable DNA-RuvA(4)-RuvB(12)-RuvC(2) complex forms which resolves the HJ.

Its subcellular location is the cytoplasm. The catalysed reaction is ATP + H2O = ADP + phosphate + H(+). Functionally, the RuvA-RuvB-RuvC complex processes Holliday junction (HJ) DNA during genetic recombination and DNA repair, while the RuvA-RuvB complex plays an important role in the rescue of blocked DNA replication forks via replication fork reversal (RFR). RuvA specifically binds to HJ cruciform DNA, conferring on it an open structure. The RuvB hexamer acts as an ATP-dependent pump, pulling dsDNA into and through the RuvAB complex. RuvB forms 2 homohexamers on either side of HJ DNA bound by 1 or 2 RuvA tetramers; 4 subunits per hexamer contact DNA at a time. Coordinated motions by a converter formed by DNA-disengaged RuvB subunits stimulates ATP hydrolysis and nucleotide exchange. Immobilization of the converter enables RuvB to convert the ATP-contained energy into a lever motion, pulling 2 nucleotides of DNA out of the RuvA tetramer per ATP hydrolyzed, thus driving DNA branch migration. The RuvB motors rotate together with the DNA substrate, which together with the progressing nucleotide cycle form the mechanistic basis for DNA recombination by continuous HJ branch migration. Branch migration allows RuvC to scan DNA until it finds its consensus sequence, where it cleaves and resolves cruciform DNA. The sequence is that of Holliday junction branch migration complex subunit RuvB from Thermoanaerobacter pseudethanolicus (strain ATCC 33223 / 39E) (Clostridium thermohydrosulfuricum).